A 262-amino-acid chain; its full sequence is Zinc import ATP-binding protein ZnuC (262 aa).

The ABC transporter domain maps to 4-220; the sequence is LNLSGVRLSH…PEYLALFGPR (217 aa). ATP is bound at residue 36 to 43; that stretch reads GPNGAGKS. Residues 238-262 form a disordered region; sequence ADGSVLPLAEGGGEPHTHGPGCRHG.

It belongs to the ABC transporter superfamily. Zinc importer (TC 3.A.1.15.5) family. As to quaternary structure, the complex is composed of two ATP-binding proteins (ZnuC), two transmembrane proteins (ZnuB) and a solute-binding protein (ZnuA).

It is found in the cell inner membrane. It catalyses the reaction Zn(2+)(out) + ATP(in) + H2O(in) = Zn(2+)(in) + ADP(in) + phosphate(in) + H(+)(in). Part of the ABC transporter complex ZnuABC involved in zinc import. Responsible for energy coupling to the transport system. This is Zinc import ATP-binding protein ZnuC from Paramagnetospirillum magneticum (strain ATCC 700264 / AMB-1) (Magnetospirillum magneticum).